Consider the following 558-residue polypeptide: 2-isopropylmalate synthase (558 aa).

The 274-residue stretch at 30-303 (PIWCSVDLRD…DPGIDCSDIN (274 aa)) folds into the Pyruvate carboxyltransferase domain. Positions 39, 242, 244, and 278 each coordinate Mg(2+). A regulatory domain region spans residues 437 to 558 (QPGARLKFLD…ANRIVGRKAR (122 aa)).

The protein belongs to the alpha-IPM synthase/homocitrate synthase family. LeuA type 2 subfamily. Homodimer. It depends on Mg(2+) as a cofactor.

The protein localises to the cytoplasm. The catalysed reaction is 3-methyl-2-oxobutanoate + acetyl-CoA + H2O = (2S)-2-isopropylmalate + CoA + H(+). It participates in amino-acid biosynthesis; L-leucine biosynthesis; L-leucine from 3-methyl-2-oxobutanoate: step 1/4. Its function is as follows. Catalyzes the condensation of the acetyl group of acetyl-CoA with 3-methyl-2-oxobutanoate (2-ketoisovalerate) to form 3-carboxy-3-hydroxy-4-methylpentanoate (2-isopropylmalate). This is 2-isopropylmalate synthase from Mesorhizobium japonicum (strain LMG 29417 / CECT 9101 / MAFF 303099) (Mesorhizobium loti (strain MAFF 303099)).